A 308-amino-acid polypeptide reads, in one-letter code: Cysteine synthase (308 aa).

K45 carries the post-translational modification N6-(pyridoxal phosphate)lysine. Pyridoxal 5'-phosphate is bound by residues N75, 179-183 (GTGGT), and S267.

This sequence belongs to the cysteine synthase/cystathionine beta-synthase family. As to quaternary structure, homodimer. Forms CymR(2):CysK(2) or CymR(4):CysK(4) complexes in the absence of O-acetylserine. Pyridoxal 5'-phosphate serves as cofactor.

The catalysed reaction is O-acetyl-L-serine + hydrogen sulfide = L-cysteine + acetate. It participates in amino-acid biosynthesis; L-cysteine biosynthesis; L-cysteine from L-serine: step 2/2. In terms of biological role, catalyzes the conversion of O-acetylserine to cysteine. Also acts as a sensor of cysteine availability in the signal transduction pathway modulating CymR activity. When cysteine is present, the pool of O-acetylserine (OAS) is low, which leads to the formation of a CymR-CysK complex and transcriptional repression of the CymR regulon occurs. In the absence of cysteine, the OAS pool is high and the CymR-CysK complex is mostly dissociated, leading to a faster dissociation of CymR from its DNA targets and the lifting of CymR-dependent repression. The chain is Cysteine synthase (cysK) from Bacillus subtilis (strain 168).